Reading from the N-terminus, the 622-residue chain is Chaperone protein HscA homolog (622 aa).

It belongs to the heat shock protein 70 family.

Its function is as follows. Chaperone involved in the maturation of iron-sulfur cluster-containing proteins. Has a low intrinsic ATPase activity which is markedly stimulated by HscB. The chain is Chaperone protein HscA homolog from Burkholderia lata (strain ATCC 17760 / DSM 23089 / LMG 22485 / NCIMB 9086 / R18194 / 383).